Here is a 116-residue protein sequence, read N- to C-terminus: uncharacterized protein (116 aa).

Positions 5-113 (EVKMVVLSTE…TGNGLVFYSP (109 aa)) constitute a VOC domain. Residue Lys-76 forms an Isoglutamyl lysine isopeptide (Lys-Gln) (interchain with Q-Cter in protein Pup) linkage.

This is an uncharacterized protein from Mycolicibacterium smegmatis (strain ATCC 700084 / mc(2)155) (Mycobacterium smegmatis).